A 911-amino-acid polypeptide reads, in one-letter code: Band 3 anion transport protein (911 aa).

Residue M1 is modified to N-acetylmethionine. Over residues 1–26 the composition is skewed to acidic residues; that stretch reads MEELQDDYEDMMEENLEQEEYEDPDI. The interval 1–40 is disordered; the sequence is MEELQDDYEDMMEENLEQEEYEDPDIPESQMEEPAAHDTE. Over 1–403 the chain is Cytoplasmic; sequence MEELQDDYED…LSDITDAFSP (403 aa). Phosphotyrosine is present on residues Y8, Y21, and Y46. A (Microbial infection) Interaction with P.falciparum (isolate K1) FBPA region spans residues 13 to 31; that stretch reads EENLEQEEYEDPDIPESQM. A globular region spans residues 55 to 290; it reads HKVYVELQEL…LGRAAATLMS (236 aa). The interval 176–185 is interaction with ANK1; sequence AVLTRSGDPS. 2 positions are modified to phosphoserine: S185 and S350. The dimerization arm stretch occupies residues 304-357; it reads RGELLHSLEGFLDCSLVLPPTDAPSEQALLSLVPVQRELLRRRYQSSPAKPDSS. Y359 bears the Phosphotyrosine mark. Residues 404-427 traverse the membrane as a helical segment; it reads QVLAAVIFIYFAALSPAITFGGLL. The Extracellular segment spans residues 428–435; that stretch reads GEKTRNQM. Residues 436-456 traverse the membrane as a helical segment; that stretch reads GVSELLISTAVQGILFALLGA. Over 457 to 459 the chain is Cytoplasmic; it reads QPL. The discontinuously helical transmembrane segment at 460 to 476 threads the bilayer; it reads LVVGFSGPLLVFEEAFF. Residues 477–485 lie on the Extracellular side of the membrane; sequence SFCETNGLE. The helical transmembrane segment at 486–506 threads the bilayer; it reads YIVGRVWIGFWLILLVVLVVA. Over 507 to 518 the chain is Cytoplasmic; the sequence is FEGSFLVRFISR. The chain crosses the membrane as a helical span at residues 519 to 541; sequence YTQEIFSFLISLIFIYETFSKLI. Residues 542 to 570 lie on the Extracellular side of the membrane; sequence KIFQDHPLQKTYNYNVLMVPKPQGPLPNT. The involved in anion transport stretch occupies residues 559–630; sequence MVPKPQGPLP…DFFIQDTYTQ (72 aa). The chain crosses the membrane as a helical span at residues 571–591; the sequence is ALLSLVLMAGTFFFAMMLRKF. The Cytoplasmic segment spans residues 592-602; sequence KNSSYFPGKLR. A helical transmembrane segment spans residues 603–623; it reads RVIGDFGVPISILIMVLVDFF. Residues 624 to 663 lie on the Extracellular side of the membrane; the sequence is IQDTYTQKLSVPDGFKVSNSSARGWVIHPLGLRSEFPIWM. N-linked (GlcNAc...) (complex) asparagine glycosylation occurs at N642. The chain crosses the membrane as a helical span at residues 664–684; that stretch reads MFASALPALLVFILIFLESQI. Topologically, residues 685–700 are cytoplasmic; that stretch reads TTLIVSKPERKMVKGS. The chain crosses the membrane as a helical span at residues 701 to 719; that stretch reads GFHLDLLLVVGMGGVAALF. A discontinuously helical transmembrane segment spans residues 720–737; it reads GMPWLSATTVRSVTHANA. The (Microbial infection) 5ABC region; interaction with P.falciparum (isolate 3D7) MSP9 stretch occupies residues 720-761; it reads GMPWLSATTVRSVTHANALTVMGKASTPGAAAQIQEVKEQRI. The Cytoplasmic segment spans residues 738–760; that stretch reads LTVMGKASTPGAAAQIQEVKEQR. 2 helical membrane-spanning segments follow: residues 761 to 781 and 782 to 800; these read ISGL…PILS and RIPL…VTSL. Residues 801 to 838 lie on the Cytoplasmic side of the membrane; the sequence is SGIQLFDRILLLFKPPKYHPDVPYVKRVKTWRMHLFTG. Positions 839 to 869 form an intramembrane region, discontinuously helical; it reads IQIICLAVLWVVKSTPASLALPFVLILTVPL. C843 carries the S-palmitoyl cysteine lipid modification. Residues 870 to 911 lie on the Cytoplasmic side of the membrane; the sequence is RRVLLPLIFRNVELQCLDADDAKATFDEEEGRDEYDEVAMPV. Position 904 is a phosphotyrosine (Y904).

It belongs to the anion exchanger (TC 2.A.31) family. As to quaternary structure, a dimer in solution, but in its membrane environment, it exists primarily as a mixture of dimers and tetramers and spans the membrane asymmetrically. Component of the ankyrin-1 complex in the erythrocyte, composed of ANK1, RHCE, RHAG, SLC4A1, EPB42, GYPA, GYPB and AQP1. Interacts with STOM; this interaction positively regulates SLC4A1 activity. Interacts with GYPA; a GYPA monomer is bound at each end of the SLC4A1 dimer forming a heterotetramer. Three SLC4A1 dimers (Band 3-I, Band 3-II and Band 3-III) participates in the ankyrin-1 complex. Interacts (via the cytoplasmic domain) with EPB42; this interaction is mediated by the SLC4A1 Band 3-I dimer. Interacts (via the cytoplasmic domain) directly with ANK1; this interaction is mediated by the SLC4A1 Band 3-II and Band 3-III dimers. Interacts with TMEM139. In terms of assembly, (Microbial infection) Interacts (via N-terminus) with P.falciparum (isolate K1) aldolase FBPA; the interaction inhibits FBPA catalytic activity. As to quaternary structure, (Microbial infection) Interacts (via the 5ABC region) with P.falciparum (isolate 3D7) MSP9/ABRA (via N-terminus). (Microbial infection) Interacts (via the 5ABC region) with P.falciparum (isolate 3D7) MSP1 p42 subunit. Post-translationally, phosphorylated on Tyr-8 and Tyr-21 most likely by SYK. PP1-resistant phosphorylation that precedes Tyr-359 and Tyr-904 phosphorylation. In terms of processing, phosphorylated on Tyr-359 and Tyr-904 most likely by LYN. PP1-inhibited phosphorylation that follows Tyr-8 and Tyr-21 phosphorylation. N-glycosylated. As to expression, detected in erythrocytes (at protein level). In terms of tissue distribution, expressed in kidney (at protein level).

Its subcellular location is the cell membrane. It is found in the basolateral cell membrane. It carries out the reaction hydrogencarbonate(in) + chloride(out) = hydrogencarbonate(out) + chloride(in). Phenyl isothiocyanate inhibits anion transport in vitro. Functionally, functions both as a transporter that mediates electroneutral anion exchange across the cell membrane and as a structural protein. Component of the ankyrin-1 complex of the erythrocyte membrane; required for normal flexibility and stability of the erythrocyte membrane and for normal erythrocyte shape via the interactions of its cytoplasmic domain with cytoskeletal proteins, glycolytic enzymes, and hemoglobin. Functions as a transporter that mediates the 1:1 exchange of inorganic anions across the erythrocyte membrane. Mediates chloride-bicarbonate exchange in the kidney, and is required for normal acidification of the urine. In terms of biological role, (Microbial infection) Acts as a receptor for P.falciparum (isolate 3D7) MSP9 and thus, facilitates merozoite invasion of erythrocytes. Acts as a receptor for P.falciparum (isolate 3D7) MSP1 and thus, facilitates merozoite invasion of erythrocytes. The sequence is that of Band 3 anion transport protein from Homo sapiens (Human).